The chain runs to 155 residues: MAGAYIVVRIKGQADVPHWAETTLKLLRLEKKHRATIIQSKENTRGMLDKVKHYVAWQEIDAGLAMELLTKRGRGPGYKKLTEKDLEGTDYPGIKELADALATGKASMSKIDRIKPWFALAPPRHGFKRSTKKMYGQKGVLGANRELSELVRSMI.

Belongs to the universal ribosomal protein uL30 family. Part of the 50S ribosomal subunit.

The sequence is that of Large ribosomal subunit protein uL30 from Cenarchaeum symbiosum (strain A).